The following is a 163-amino-acid chain: Lipoprotein signal peptidase (163 aa).

The next 4 helical transmembrane spans lie at valine 5–leucine 25, isoleucine 37–leucine 57, leucine 67–serine 87, and leucine 91–tyrosine 111. Residues aspartate 121 and aspartate 139 contribute to the active site. Residues tryptophan 132–tyrosine 152 form a helical membrane-spanning segment.

Belongs to the peptidase A8 family.

The protein localises to the cell inner membrane. The catalysed reaction is Release of signal peptides from bacterial membrane prolipoproteins. Hydrolyzes -Xaa-Yaa-Zaa-|-(S,diacylglyceryl)Cys-, in which Xaa is hydrophobic (preferably Leu), and Yaa (Ala or Ser) and Zaa (Gly or Ala) have small, neutral side chains.. The protein operates within protein modification; lipoprotein biosynthesis (signal peptide cleavage). Its function is as follows. This protein specifically catalyzes the removal of signal peptides from prolipoproteins. This is Lipoprotein signal peptidase from Sulfurihydrogenibium sp. (strain YO3AOP1).